Consider the following 134-residue polypeptide: Early E3B 14.9 kDa protein (134 aa).

Positions 1 to 19 are cleaved as a signal peptide; the sequence is MQAMLPVILILLLPCIALA. A helical transmembrane segment spans residues 54–78; that stretch reads YWIVIVGIINILSCTFFSITIYPTF.

It belongs to the adenoviridae E3_14 family. Post-translationally, phosphorylated on serine; O-glycosylated, but not N-glycosylated.

It localises to the host membrane. Functionally, down-regulates the EGF receptor and prevents cytolysis by TNF. The protein is Early E3B 14.9 kDa protein of Homo sapiens (Human).